The sequence spans 193 residues: Protein PapJ (193 aa).

Residues 1-27 (MVVNKTTAVLYLIALSLSGFIHTFLRA) form the signal peptide.

It localises to the periplasm. Its function is as follows. This protein maintains pilus integrity and thus is an important participant in pilus assembly. It may function as molecular chaperone directly or indirectly in the correct assembly of PapA subunits. The polypeptide is Protein PapJ (papJ) (Escherichia coli).